The chain runs to 127 residues: NADPH-dependent 7-cyano-7-deazaguanine reductase (127 aa).

Cysteine 40 (thioimide intermediate) is an active-site residue. Aspartate 47 serves as the catalytic Proton donor. Substrate contacts are provided by residues valine 62 to leucine 64 and histidine 81 to glutamate 82.

This sequence belongs to the GTP cyclohydrolase I family. QueF type 1 subfamily.

The protein localises to the cytoplasm. The catalysed reaction is 7-aminomethyl-7-carbaguanine + 2 NADP(+) = 7-cyano-7-deazaguanine + 2 NADPH + 3 H(+). Its pathway is tRNA modification; tRNA-queuosine biosynthesis. Functionally, catalyzes the NADPH-dependent reduction of 7-cyano-7-deazaguanine (preQ0) to 7-aminomethyl-7-deazaguanine (preQ1). The protein is NADPH-dependent 7-cyano-7-deazaguanine reductase of Campylobacter lari (strain RM2100 / D67 / ATCC BAA-1060).